The following is a 349-amino-acid chain: Anthranilate phosphoribosyltransferase (349 aa).

Residues Gly-82, 85 to 86 (GD), 92 to 95 (NVST), 110 to 118 (KHGNRAVSG), and Ser-122 contribute to the 5-phospho-alpha-D-ribose 1-diphosphate site. Gly-82 contacts anthranilate. Ser-94 contacts Mg(2+). Residue Asn-113 coordinates anthranilate. Anthranilate is bound at residue Arg-168. The Mg(2+) site is built by Asp-227 and Glu-228.

It belongs to the anthranilate phosphoribosyltransferase family. As to quaternary structure, homodimer. It depends on Mg(2+) as a cofactor.

The catalysed reaction is N-(5-phospho-beta-D-ribosyl)anthranilate + diphosphate = 5-phospho-alpha-D-ribose 1-diphosphate + anthranilate. It functions in the pathway amino-acid biosynthesis; L-tryptophan biosynthesis; L-tryptophan from chorismate: step 2/5. Its function is as follows. Catalyzes the transfer of the phosphoribosyl group of 5-phosphorylribose-1-pyrophosphate (PRPP) to anthranilate to yield N-(5'-phosphoribosyl)-anthranilate (PRA). This chain is Anthranilate phosphoribosyltransferase, found in Pseudomonas syringae pv. tomato (strain ATCC BAA-871 / DC3000).